The following is a 1220-amino-acid chain: DNA polymerase catalytic subunit (1220 aa).

Disordered stretches follow at residues 21 to 43 and 641 to 691; these read GKRPFFRPGSGQTAETERPRPPQ and QADA…KPGV. Residues 646 to 660 are compositionally biased toward polar residues; the sequence is SETSELAMDSQSHAF.

This sequence belongs to the DNA polymerase type-B family. In terms of assembly, forms a complex with the ssDNA-binding protein, the DNA polymerase processivity factor, and the alkaline exonuclease. Interacts with the helicase-primase complex composed of the primase, the helicase and the primase-associated factor; this interaction may coordinate leading and lagging strand DNA synthesis at the replication fork.

It localises to the host nucleus. The enzyme catalyses DNA(n) + a 2'-deoxyribonucleoside 5'-triphosphate = DNA(n+1) + diphosphate. It carries out the reaction Endonucleolytic cleavage to 5'-phosphomonoester.. In terms of biological role, replicates viral genomic DNA. The replication complex is composed of six viral proteins: the DNA polymerase, processivity factor, primase, primase-associated factor, helicase, and ssDNA-binding protein. Additionally, the polymerase contains an intrinsic ribonuclease H (RNase H) activity that specifically degrades RNA/DNA heteroduplexes or duplex DNA substrates in the 5' to 3' direction. Therefore, it can catalyze the excision of the RNA primers that initiate the synthesis of Okazaki fragments at a replication fork during viral DNA replication. The chain is DNA polymerase catalytic subunit from Equus caballus (Horse).